Here is a 505-residue protein sequence, read N- to C-terminus: Glycerol kinase 2 (505 aa).

An ADP-binding site is contributed by T17. Positions 17, 18, and 19 each coordinate ATP. A sn-glycerol 3-phosphate-binding site is contributed by T17. R21 is a binding site for ADP. Residues R87, E88, Y139, and D249 each contribute to the sn-glycerol 3-phosphate site. Glycerol contacts are provided by R87, E88, Y139, D249, and Q250. T271 and G314 together coordinate ADP. ATP contacts are provided by T271, G314, Q318, and G415. The ADP site is built by G415 and N419.

The protein belongs to the FGGY kinase family.

The catalysed reaction is glycerol + ATP = sn-glycerol 3-phosphate + ADP + H(+). Its pathway is polyol metabolism; glycerol degradation via glycerol kinase pathway; sn-glycerol 3-phosphate from glycerol: step 1/1. Inhibited by fructose 1,6-bisphosphate (FBP). In terms of biological role, key enzyme in the regulation of glycerol uptake and metabolism. Catalyzes the phosphorylation of glycerol to yield sn-glycerol 3-phosphate. This is Glycerol kinase 2 from Pseudomonas aeruginosa (strain ATCC 15692 / DSM 22644 / CIP 104116 / JCM 14847 / LMG 12228 / 1C / PRS 101 / PAO1).